We begin with the raw amino-acid sequence, 656 residues long: Choline transporter-like protein 3 (656 aa).

A helical transmembrane segment spans residues 37 to 57; sequence WLVLFFLFWTGLVFIMGYSVV. Asn-141 and Asn-154 each carry an N-linked (GlcNAc...) asparagine glycan. The next 5 membrane-spanning stretches (helical) occupy residues 216 to 236, 242 to 262, 288 to 308, 337 to 357, and 381 to 401; these read DTIL…LFAF, LLIH…CGVL, LAFA…IFTL, LWTC…LLSL, and YMWW…LACQ. Asn-506 and Asn-524 each carry an N-linked (GlcNAc...) asparagine glycan. The helical transmembrane segment at 537–557 threads the bilayer; it reads FVIFLGKVLVVCFSIFGGLMA. Asn-559 carries an N-linked (GlcNAc...) asparagine glycan. The helical transmembrane segment at 566-586 threads the bilayer; that stretch reads VWAIPLLLVAFFACVVAHSFL. The segment at 634–656 is disordered; the sequence is AKSQGQKDALPNEEGTELQPIVR.

This sequence belongs to the CTL (choline transporter-like) family.

The protein localises to the membrane. The sequence is that of Choline transporter-like protein 3 (Slc44a3) from Mus musculus (Mouse).